We begin with the raw amino-acid sequence, 370 residues long: Protein RKD5 (370 aa).

The tract at residues 193–232 (DSETESEESVNEKTEHSEFENDKTEQSESDAKTEILKKKK) is disordered. Basic and acidic residues predominate over residues 202–228 (VNEKTEHSEFENDKTEQSESDAKTEIL). Residues 224–309 (KTEILKKKKR…AEKQQEKNEA (86 aa)) form the RWP-RK domain. A coiled-coil region spans residues 283–328 (HRKIKSLDCLIHDLQREAEKQQEKNEAAAMAVAKKQEKLETEKRNI). Residues 347-370 (NFKKRHRASRAKKNQESLVTSSST) form a disordered region. Residues 349–358 (KKRHRASRAK) are compositionally biased toward basic residues.

The protein localises to the nucleus. Putative transcription factor. The chain is Protein RKD5 (RKD5) from Arabidopsis thaliana (Mouse-ear cress).